Consider the following 51-residue polypeptide: Large ribosomal subunit protein bL33 (51 aa).

Belongs to the bacterial ribosomal protein bL33 family.

This is Large ribosomal subunit protein bL33 from Methylococcus capsulatus (strain ATCC 33009 / NCIMB 11132 / Bath).